A 360-amino-acid chain; its full sequence is Thioredoxin domain-containing protein 15 (360 aa).

The signal sequence occupies residues 1-32 (MVPAAGRRPPRVMRLLGWWQVLLWVLGLPVRG). The Extracellular portion of the chain corresponds to 33 to 321 (VEVAEESGRL…GPLPSTLIKS (289 aa)). The interval 141 to 173 (PDREEEYYTEPEVAESDAAPTEDSNNTESLKSP) is disordered. A compositionally biased stretch (acidic residues) spans 143–155 (REEEYYTEPEVAE). The region spanning 153–296 (VAESDAAPTE…LKIFIFNQTG (144 aa)) is the Thioredoxin domain. 4 N-linked (GlcNAc...) asparagine glycosylation sites follow: N187, N194, N206, and N293. The helical transmembrane segment at 322 to 342 (VDWLLVFSLFFLISFIMYATI) threads the bilayer. Topologically, residues 343–360 (RTESIRWLIPGQEQEHVE) are cytoplasmic.

It is found in the cell projection. Its subcellular location is the cilium membrane. Functionally, acts as a positive regulator of ciliary hedgehog signaling. Involved in ciliogenesis. The protein is Thioredoxin domain-containing protein 15 (TXNDC15) of Homo sapiens (Human).